The following is a 192-amino-acid chain: uncharacterized protein (192 aa).

Positions 1–18 (MNSKFILKYFILAFFLVS) are cleaved as a signal peptide. The N-palmitoyl cysteine moiety is linked to residue Cys19. Cys19 is lipidated: S-diacylglycerol cysteine.

It is found in the cell membrane. This is an uncharacterized protein from Borreliella burgdorferi (strain ATCC 35210 / DSM 4680 / CIP 102532 / B31) (Borrelia burgdorferi).